A 573-amino-acid polypeptide reads, in one-letter code: uncharacterized protein (573 aa).

This is an uncharacterized protein from Treponema pallidum (strain Nichols).